The sequence spans 226 residues: Uracil-DNA glycosylase (226 aa).

The active-site Proton acceptor is the D64.

The protein belongs to the uracil-DNA glycosylase (UDG) superfamily. UNG family.

The protein localises to the cytoplasm. It carries out the reaction Hydrolyzes single-stranded DNA or mismatched double-stranded DNA and polynucleotides, releasing free uracil.. In terms of biological role, excises uracil residues from the DNA which can arise as a result of misincorporation of dUMP residues by DNA polymerase or due to deamination of cytosine. In Fusobacterium nucleatum subsp. nucleatum (strain ATCC 25586 / DSM 15643 / BCRC 10681 / CIP 101130 / JCM 8532 / KCTC 2640 / LMG 13131 / VPI 4355), this protein is Uracil-DNA glycosylase.